The chain runs to 572 residues: Mitochondrial distribution and morphology protein 34 (572 aa).

Residues 1–195 (MAFNFNWSPL…LPAIIHRLSL (195 aa)) form the SMP-LTD domain. Disordered regions lie at residues 212–236 (TASANGEGPGQDPLASPPQDPVDAL), 321–426 (VGSM…PDND), 477–522 (SATP…DNPT), and 553–572 (CGPFWDRHSQEESPPPAYGH). Low complexity predominate over residues 330-348 (SASMVSSQSRSSTPSHTFS). Residues 358–370 (RHSKAHARKRKKR) are compositionally biased toward basic residues. Over residues 371–381 (VVDLRRPKTTD) the composition is skewed to basic and acidic residues. 2 stretches are compositionally biased toward polar residues: residues 387-400 (SDESSFTESTSAPS) and 500-511 (DSSAGSSRQLPS).

Belongs to the MDM34 family. Component of the ER-mitochondria encounter structure (ERMES) or MDM complex, composed of mmm1, mdm10, mdm12 and mdm34.

The protein resides in the mitochondrion outer membrane. Functionally, component of the ERMES/MDM complex, which serves as a molecular tether to connect the endoplasmic reticulum (ER) and mitochondria. Components of this complex are involved in the control of mitochondrial shape and protein biogenesis, and function in nonvesicular lipid trafficking between the ER and mitochondria. Mdm34 is required for the interaction of the ER-resident membrane protein mmm1 and the outer mitochondrial membrane-resident beta-barrel protein mdm10. In Aspergillus fumigatus (strain CBS 144.89 / FGSC A1163 / CEA10) (Neosartorya fumigata), this protein is Mitochondrial distribution and morphology protein 34.